A 164-amino-acid polypeptide reads, in one-letter code: MNRAAIYPGSFDPLTNGHLAIIQRGLNLFDRLVVAVANNPQKSPMFTVDERKALIREAVGNDPRVEVDSFDGLMVDYARTRGIPKVLRGLRAVSDFEYEFQLANMNKKLLPEFESVFVMTGEDYFFVSARLVREVAQFGGNVEGLVPANVLEALQRKLGRPPRS.

S10 contacts substrate. ATP contacts are provided by residues S10–F11 and H18. 3 residues coordinate substrate: K42, M74, and R88. Residues G89 to R91, E99, and Y124 to R130 contribute to the ATP site.

It belongs to the bacterial CoaD family. Homohexamer. It depends on Mg(2+) as a cofactor.

The protein resides in the cytoplasm. It carries out the reaction (R)-4'-phosphopantetheine + ATP + H(+) = 3'-dephospho-CoA + diphosphate. The protein operates within cofactor biosynthesis; coenzyme A biosynthesis; CoA from (R)-pantothenate: step 4/5. Its function is as follows. Reversibly transfers an adenylyl group from ATP to 4'-phosphopantetheine, yielding dephospho-CoA (dPCoA) and pyrophosphate. This Anaeromyxobacter dehalogenans (strain 2CP-1 / ATCC BAA-258) protein is Phosphopantetheine adenylyltransferase.